The sequence spans 492 residues: RNA-binding protein Nova-2 (492 aa).

Residues 10–26 carry the Bipartite nuclear localization signal motif; sequence KRPLETPPEVVCTKRSN. In terms of domain architecture, KH 1 spans 32 to 99; it reads EYFLKVLIPS…EALNAVHSFI (68 aa). Lys-112 participates in a covalent cross-link: Glycyl lysine isopeptide (Lys-Gly) (interchain with G-Cter in SUMO2). 2 KH domains span residues 130 to 196 and 406 to 473; these read AKQA…VSAI and KELV…QYLI.

Interacts with PTBP2; the interaction is direct. In terms of tissue distribution, brain. Expression restricted to astrocytes.

It is found in the nucleus. In terms of biological role, functions to regulate alternative splicing in neurons by binding pre-mRNA in a sequence-specific manner to activate exon inclusion or exclusion. It binds specifically to the sequences 5'-YCAY-3' and regulates splicing in only a subset of regulated exons. Binding to an exonic 5'-YCAY-3' cluster changes the protein complexes assembled on pre-mRNA, blocking U1 snRNP binding and exon inclusion, whereas binding to an intronic 5'-YCAY-3' cluster enhances spliceosome assembly and exon inclusion. With NOVA1, they perform unique biological functions in different brain areas and cell types. Uniquely regulates alternative splicing events of a series of axon guidance related genes during cortical development, being essential for central nervous system development by regulating neural networks wiring. Regulates differentially alternative splicing on the same transcripts expressed in different neurons. This includes functional differences in transcripts expressed in cortical and cerebellar excitatory versus inhibitory neurons where is required for, respectively, development of laminar structure and motor coordination and synapse formation. Also the regulation the regulation of intron retention can sequester the trans-acting splicing factor PTBP2, acting as a variable cis-acting scaffolding platform for PTBP2 across various natural conditions. The sequence is that of RNA-binding protein Nova-2 from Homo sapiens (Human).